Reading from the N-terminus, the 208-residue chain is Protein Nef (208 aa).

Residue glycine 2 is the site of N-myristoyl glycine; by host attachment. Serine 6 carries the phosphoserine; by host modification. Residues 64 to 67 are acidic; interacts with host PACS1 and PACS2; stabilizes the interaction of NEF/MHC-I with host AP1M1; necessary for MHC-I internalization; that stretch reads EEEE. The interval 71-80 is SH3-binding; interaction with Src family tyrosine kinases; it reads PVKPQVPLRP. The PxxP; stabilizes the interaction of NEF/MHC-I with host AP1M1; necessary for MHC-I internalization signature appears at 74–77; it reads PQVP. The tract at residues 110 to 126 is mediates dimerization, Nef-PTE1 interaction; it reads DILDLWVYHTQGYFPDW. A binding to ATP6V1H region spans residues 150–182; the sequence is VEPEKIEEANKGENNCLLHPMSQHGMDDPEREV. A Dileucine internalization motif; necessary for CD4 internalization motif is present at residues 166–167; that stretch reads LL. The Diacidic; necessary for CD4 internalization signature appears at 176-177; it reads DD.

Belongs to the lentivirus primate group Nef protein family. As to quaternary structure, monomer; cytosolic form. Homodimer; membrane bound form. Interacts with Nef associated p21-activated kinase (PAK2); this interaction activates PAK2. Associates with the Nef-MHC-I-AP1 complex; this complex is required for MHC-I internalization. Interacts (via C-terminus) with host PI3-kinase. Interacts with host PACS1; this interaction seems to be weak. Interacts with host PACS2. Interacts with host LCK and MAPK3; these interactions inhibit the kinase activity of the latter. Interacts with host ATP6V1H; this interaction may play a role in CD4 endocytosis. Associates with the CD4-Nef-AP2 complex; this complex is required for CD4 internalization. Interacts with host AP2 subunit alpha and AP2 subunit sigma2. Interacts with TCR-zeta chain; this interaction up-regulates the Fas ligand (FasL) surface expression. Interacts with host HCK, LYN, and SRC; these interactions activate the Src family kinases. Interacts with MAP3K5; this interaction inhibits the Fas and TNFR-mediated death signals. Interacts with beta-COP and PTE1. Interacts with human RACK1; this increases Nef phosphorylation by PKC. Interacts with TP53; this interaction decreases the half-life of TP53, protecting the infected cell against p53-mediated apoptosis. Post-translationally, the virion-associated Nef proteins are cleaved by the viral protease to release the soluble C-terminal core protein. Nef is probably cleaved concomitantly with viral structural proteins on maturation of virus particles. In terms of processing, myristoylated. Phosphorylated on serine residues, probably by host PKCdelta and theta.

The protein resides in the host cell membrane. It localises to the virion. The protein localises to the secreted. It is found in the host Golgi apparatus membrane. In terms of biological role, factor of infectivity and pathogenicity, required for optimal virus replication. Alters numerous pathways of T-lymphocyte function and down-regulates immunity surface molecules in order to evade host defense and increase viral infectivity. Alters the functionality of other immunity cells, like dendritic cells, monocytes/macrophages and NK cells. In infected CD4(+) T-lymphocytes, down-regulates the surface MHC-I, mature MHC-II, CD4, CD28, CCR5 and CXCR4 molecules. Mediates internalization and degradation of host CD4 through the interaction of with the cytoplasmic tail of CD4, the recruitment of AP-2 (clathrin adapter protein complex 2), internalization through clathrin coated pits, and subsequent transport to endosomes and lysosomes for degradation. Diverts host MHC-I molecules to the trans-Golgi network-associated endosomal compartments by an endocytic pathway to finally target them for degradation. MHC-I down-regulation may involve AP-1 (clathrin adapter protein complex 1) or possibly Src family kinase-ZAP70/Syk-PI3K cascade recruited by PACS2. In consequence infected cells are masked for immune recognition by cytotoxic T-lymphocytes. Decreasing the number of immune receptors also prevents reinfection by more HIV particles (superinfection). Down-regulates host SERINC3 and SERINC5 thereby excluding these proteins from the viral particles. Virion infectivity is drastically higher when SERINC3 or SERINC5 are excluded from the viral envelope, because these host antiviral proteins impair the membrane fusion event necessary for subsequent virion penetration. Functionally, bypasses host T-cell signaling by inducing a transcriptional program nearly identical to that of anti-CD3 cell activation. Interaction with TCR-zeta chain up-regulates the Fas ligand (FasL). Increasing surface FasL molecules and decreasing surface MHC-I molecules on infected CD4(+) cells send attacking cytotoxic CD8+ T-lymphocytes into apoptosis. Its function is as follows. Plays a role in optimizing the host cell environment for viral replication without causing cell death by apoptosis. Protects the infected cells from apoptosis in order to keep them alive until the next virus generation is ready to strike. Inhibits the Fas and TNFR-mediated death signals by blocking MAP3K5/ASK1. Decreases the half-life of TP53, protecting the infected cell against p53-mediated apoptosis. Inhibits the apoptotic signals regulated by the Bcl-2 family proteins through the formation of a Nef/PI3-kinase/PAK2 complex that leads to activation of PAK2 and induces phosphorylation of host BAD. In terms of biological role, extracellular Nef protein targets CD4(+) T-lymphocytes for apoptosis by interacting with CXCR4 surface receptors. The polypeptide is Protein Nef (Human immunodeficiency virus type 1 group M subtype B (isolate MN) (HIV-1)).